Reading from the N-terminus, the 447-residue chain is NADP-specific glutamate dehydrogenase (447 aa).

Substrate is bound by residues lysine 92, glutamine 113, and lysine 116. Lysine 128 functions as the Proton donor in the catalytic mechanism. A substrate-binding site is contributed by glycine 167. 2 residues coordinate NADP(+): threonine 211 and asparagine 242. Serine 380 contacts substrate.

The protein belongs to the Glu/Leu/Phe/Val dehydrogenases family. Homohexamer.

The catalysed reaction is L-glutamate + NADP(+) + H2O = 2-oxoglutarate + NH4(+) + NADPH + H(+). Catalyzes the reversible oxidative deamination of glutamate to alpha-ketoglutarate and ammonia. The protein is NADP-specific glutamate dehydrogenase (gdhA) of Salmonella typhimurium (strain LT2 / SGSC1412 / ATCC 700720).